Here is a 283-residue protein sequence, read N- to C-terminus: Ribosomal RNA small subunit methyltransferase H (283 aa).

S-adenosyl-L-methionine is bound by residues G31–H33, D50, F77, D93, and Q100.

The protein belongs to the methyltransferase superfamily. RsmH family.

The protein localises to the cytoplasm. It catalyses the reaction cytidine(1402) in 16S rRNA + S-adenosyl-L-methionine = N(4)-methylcytidine(1402) in 16S rRNA + S-adenosyl-L-homocysteine + H(+). Its function is as follows. Specifically methylates the N4 position of cytidine in position 1402 (C1402) of 16S rRNA. The sequence is that of Ribosomal RNA small subunit methyltransferase H from Trichodesmium erythraeum (strain IMS101).